Here is a 138-residue protein sequence, read N- to C-terminus: Large ribosomal subunit protein uL16 (138 aa).

Basic residues predominate over residues 1–17 (MLQPKRTKFRKQHKGRN). Residues 1–22 (MLQPKRTKFRKQHKGRNRGVAT) are disordered.

This sequence belongs to the universal ribosomal protein uL16 family. Part of the 50S ribosomal subunit.

Functionally, binds 23S rRNA and is also seen to make contacts with the A and possibly P site tRNAs. The protein is Large ribosomal subunit protein uL16 of Acidithiobacillus ferrooxidans (strain ATCC 23270 / DSM 14882 / CIP 104768 / NCIMB 8455) (Ferrobacillus ferrooxidans (strain ATCC 23270)).